The chain runs to 1044 residues: Elongation factor 3A (1044 aa).

Residue Ser2 is modified to N-acetylserine. The HEAT 1 repeat unit spans residues 5–42 (QQSIKVLEELFQKLSVATADNRHEIASEVASFLNGNII). Positions 42, 44, and 83 each coordinate ADP. HEAT repeat units lie at residues 86-123 (PYIV…AVNP), 125-162 (AIKA…AAKD), 166-203 (LRMP…TVDN), 205-241 (DIER…EVTP), 242-279 (ATLS…LVED), and 285-323 (PFLG…VGNV). Residues Lys187 and Lys196 each carry the N6,N6,N6-trimethyllysine modification. Residue Lys350 forms a Glycyl lysine isopeptide (Lys-Gly) (interchain with G-Cter in ubiquitin) linkage. 3 residues coordinate ADP: Thr392, His396, and Glu397. Positions 426–641 (DEGEDLCNCE…CPAAKAYEEL (216 aa)) constitute an ABC transporter 1 domain. Residue Lys636 forms a Glycyl lysine isopeptide (Lys-Gly) (interchain with G-Cter in ubiquitin) linkage. Residue Ser642 is modified to Phosphoserine. The 327-residue stretch at 667-993 (VKVTNMEFQY…AGPRIEKKED (327 aa)) folds into the ABC transporter 2 domain. An ADP-binding site is contributed by Asn703. The residue at position 789 (Lys789) is an N6,N6,N6-trimethyllysine. ADP-binding residues include Glu922, Asn925, and His951. Thr972 carries the phosphothreonine modification. Ser974 bears the Phosphoserine mark. The disordered stretch occupies residues 974-1044 (SGHNWVSGQG…DAYVSSDEEF (71 aa)). The segment covering 1007–1031 (GGKKKKKLSSAELRKKKKERMKKKK) has biased composition (basic residues). Ser1039 and Ser1040 each carry phosphoserine.

The protein belongs to the ABC transporter superfamily. ABCF family. EF3 subfamily. As to quaternary structure, monomer. Interacts with elongation factor 1A (eEF1A). Interacts through its N-terminus with 18S rRNA. Associates with ribosomes; preferentially binds ribosomes in the post-translocational state (bearing a peptidyl-tRNA in the P-site) in the presence of ATP, suggesting that ATP hydrolysis is required for ribosome dissociation.

It localises to the cytoplasm. It is found in the cytosol. It catalyses the reaction ATP + H2O = ADP + phosphate + H(+). Its pathway is protein biosynthesis; polypeptide chain elongation. Inhibited by the translational inhibitors neomycin and alpha-sarcin, which suppress the ATPase activity. Functionally, ribosome-dependent ATPase that functions in cytoplasmic translation elongation. Required for the ATP-dependent release of deacylated tRNA from the ribosomal E-site during protein biosynthesis. Stimulates the eEF1A-dependent binding of aminoacyl-tRNA to the ribosomal A-site, which has reduced affinity for tRNA as long as the E-site is occupied. Assists translation termination by stimulating the release of nascent protein from the ribosome by release factors. In nutrient-replete conditions, occupies the space on the ribosome bound by GCN1 during amino acid starvation conditions, and therefore indirectly negatively regulates GCN2 kinase activity in replete conditions. In Saccharomyces cerevisiae (strain ATCC 204508 / S288c) (Baker's yeast), this protein is Elongation factor 3A (YEF3).